The following is a 265-amino-acid chain: tRNA (guanine-N(7)-)-methyltransferase (265 aa).

Basic and acidic residues predominate over residues 1 to 16 (MNHDDPNASGVPHDDA). Positions 1-40 (MNHDDPNASGVPHDDANDAAPASASDAARATGHADDESSP) are disordered. The span at 18–31 (DAAPASASDAARAT) shows a compositional bias: low complexity. Positions 95, 120, 147, and 170 each coordinate S-adenosyl-L-methionine. Aspartate 170 is a catalytic residue. Substrate contacts are provided by residues lysine 174, aspartate 206, and 241-244 (TKFE).

This sequence belongs to the class I-like SAM-binding methyltransferase superfamily. TrmB family.

The enzyme catalyses guanosine(46) in tRNA + S-adenosyl-L-methionine = N(7)-methylguanosine(46) in tRNA + S-adenosyl-L-homocysteine. It participates in tRNA modification; N(7)-methylguanine-tRNA biosynthesis. Functionally, catalyzes the formation of N(7)-methylguanine at position 46 (m7G46) in tRNA. This is tRNA (guanine-N(7)-)-methyltransferase from Burkholderia thailandensis (strain ATCC 700388 / DSM 13276 / CCUG 48851 / CIP 106301 / E264).